We begin with the raw amino-acid sequence, 74 residues long: Conotoxin SIIID (74 aa).

A signal peptide spans 1-20 (MMSKLGVLLTVCLLLFPLTA). Residues 21–53 (LPLDGDQPADQLEDRMQDDISSEQYPSFVRRQK) constitute a propeptide that is removed on maturation. Cystine bridges form between Cys54-Cys71, Cys55-Cys73, and Cys61-Cys74.

This sequence belongs to the conotoxin M superfamily. Post-translationally, three disulfide isomers have been synthesized and tested. SIIID with the disulfide pairing 1-4;2-5;3-6 is the most active. In terms of tissue distribution, expressed by the venom duct.

It localises to the secreted. Its function is as follows. The short synthetic peptide SIIID (range 54-74, with disulfide pairing 1-4, 2-5 and 3-6) reversibly inhibits human alpha-7/CHRNA7 acetylcholine receptor (IC(50)=880 nM). Shows a paralytic effect in fish. The protein is Conotoxin SIIID of Conus striatus (Striated cone).